A 327-amino-acid chain; its full sequence is Glycerol-3-phosphate dehydrogenase [NAD(P)+] (327 aa).

NADPH contacts are provided by Phe-14, Arg-35, and Lys-108. Positions 108 and 136 each coordinate sn-glycerol 3-phosphate. Residue Ala-140 participates in NADPH binding. 5 residues coordinate sn-glycerol 3-phosphate: Lys-191, Asp-244, Ser-254, Arg-255, and Asn-256. The active-site Proton acceptor is the Lys-191. Position 255 (Arg-255) interacts with NADPH. Residues Leu-275 and Glu-277 each coordinate NADPH.

Belongs to the NAD-dependent glycerol-3-phosphate dehydrogenase family.

The protein localises to the cytoplasm. It catalyses the reaction sn-glycerol 3-phosphate + NAD(+) = dihydroxyacetone phosphate + NADH + H(+). The enzyme catalyses sn-glycerol 3-phosphate + NADP(+) = dihydroxyacetone phosphate + NADPH + H(+). It functions in the pathway membrane lipid metabolism; glycerophospholipid metabolism. Catalyzes the reduction of the glycolytic intermediate dihydroxyacetone phosphate (DHAP) to sn-glycerol 3-phosphate (G3P), the key precursor for phospholipid synthesis. The sequence is that of Glycerol-3-phosphate dehydrogenase [NAD(P)+] from Agrobacterium fabrum (strain C58 / ATCC 33970) (Agrobacterium tumefaciens (strain C58)).